A 359-amino-acid chain; its full sequence is Peptide chain release factor 1 (359 aa).

Glutamine 236 bears the N5-methylglutamine mark. Residues 288–307 are disordered; the sequence is QDEQDAERKSTIGTGDRSER. Basic and acidic residues predominate over residues 293–307; sequence AERKSTIGTGDRSER.

The protein belongs to the prokaryotic/mitochondrial release factor family. Post-translationally, methylated by PrmC. Methylation increases the termination efficiency of RF1.

Its subcellular location is the cytoplasm. Its function is as follows. Peptide chain release factor 1 directs the termination of translation in response to the peptide chain termination codons UAG and UAA. The protein is Peptide chain release factor 1 of Streptococcus sanguinis (strain SK36).